The sequence spans 105 residues: Large ribosomal subunit protein eL36 (105 aa).

Lysine 62 bears the N6-acetyllysine mark.

It belongs to the eukaryotic ribosomal protein eL36 family. Component of the large ribosomal subunit.

It is found in the cytoplasm. The protein resides in the cytosol. Its function is as follows. Component of the large ribosomal subunit. The ribosome is a large ribonucleoprotein complex responsible for the synthesis of proteins in the cell. This is Large ribosomal subunit protein eL36 (RPL36) from Bos taurus (Bovine).